Reading from the N-terminus, the 375-residue chain is Putative type I specificity subunit S.MpnORF638P (375 aa).

The protein belongs to the type-I restriction system S methylase family. The methyltransferase is composed of M and S polypeptides.

Functionally, the specificity (S) subunit of a type I methyltransferase (MTase); this subunit dictates DNA sequence specificity. The single R subunit has multiple frameshifts and is probably not expressed. In Mycoplasma pneumoniae (strain ATCC 29342 / M129 / Subtype 1) (Mycoplasmoides pneumoniae), this protein is Putative type I specificity subunit S.MpnORF638P.